We begin with the raw amino-acid sequence, 445 residues long: tRNA-2-methylthio-N(6)-dimethylallyladenosine synthase (445 aa).

The region spanning 2 to 117 is the MTTase N-terminal domain; the sequence is QGLYIKSYGC…LPELIVKARK (116 aa). The [4Fe-4S] cluster site is built by cysteine 11, cysteine 47, cysteine 80, cysteine 157, cysteine 161, and cysteine 164. A Radical SAM core domain is found at 143 to 374; it reads KNQKVSAFIS…QELVHKQQLE (232 aa). One can recognise a TRAM domain in the interval 377–441; the sequence is KKMIGETHPV…KNHLTGIIPH (65 aa).

Belongs to the methylthiotransferase family. MiaB subfamily. Monomer. [4Fe-4S] cluster is required as a cofactor.

It localises to the cytoplasm. It carries out the reaction N(6)-dimethylallyladenosine(37) in tRNA + (sulfur carrier)-SH + AH2 + 2 S-adenosyl-L-methionine = 2-methylsulfanyl-N(6)-dimethylallyladenosine(37) in tRNA + (sulfur carrier)-H + 5'-deoxyadenosine + L-methionine + A + S-adenosyl-L-homocysteine + 2 H(+). In terms of biological role, catalyzes the methylthiolation of N6-(dimethylallyl)adenosine (i(6)A), leading to the formation of 2-methylthio-N6-(dimethylallyl)adenosine (ms(2)i(6)A) at position 37 in tRNAs that read codons beginning with uridine. This is tRNA-2-methylthio-N(6)-dimethylallyladenosine synthase from Ehrlichia ruminantium (strain Gardel).